We begin with the raw amino-acid sequence, 393 residues long: Protein TsgA (393 aa).

The Cytoplasmic segment spans residues 1–10; the sequence is MTNSNRIKLT. A helical transmembrane segment spans residues 11-31; the sequence is WISFLSYALTGALVIVTGMVM. Over 32-50 the chain is Periplasmic; the sequence is GNIADYFHLPVSSMSNTFT. Residues 51 to 71 form a helical membrane-spanning segment; the sequence is FLNAGILISIFLNAWLMEIVP. Over 72–77 the chain is Cytoplasmic; it reads LKTQLR. The helical transmembrane segment at 78-98 threads the bilayer; that stretch reads FGFILMVLAVAGLMFSHSLAL. The Periplasmic portion of the chain corresponds to 99–100; the sequence is FS. The chain crosses the membrane as a helical span at residues 101–121; that stretch reads AAMFVLGLVSGITMSIGTFLI. Residues 122 to 133 are Cytoplasmic-facing; the sequence is TQLYEGRQRGSR. A helical membrane pass occupies residues 134 to 154; the sequence is LLFTDSFFSMAGMIFPMVAAF. At 155 to 161 the chain is on the periplasmic side; it reads LLARSIE. Residues 162 to 182 traverse the membrane as a helical segment; the sequence is WYWVYACIGLVYLAIFILTFG. The Cytoplasmic segment spans residues 183-205; it reads CEFPALGKHAQHSQAPVVKEKWG. Residues 206–226 traverse the membrane as a helical segment; sequence IGVLFLAVAALCYILGQLGFI. Over 227–244 the chain is Periplasmic; it reads SWVPEYAKGLGMSLNDAG. A helical membrane pass occupies residues 245 to 265; the sequence is ALVSDFWMSYMFGMWAFSFIL. Residues 266–272 are Cytoplasmic-facing; it reads RFFDLQR. The chain crosses the membrane as a helical span at residues 273-293; it reads ILTVLAGMAAVLMYLFITGTQ. Over 294-297 the chain is Periplasmic; the sequence is AHMP. A helical membrane pass occupies residues 298 to 318; sequence WFILTLGFFSSAIYTSIITLG. The Cytoplasmic segment spans residues 319-331; that stretch reads SQQTKVASPKLVN. The helical transmembrane segment at 332–352 threads the bilayer; sequence FILTCGTIGTMLTFVVTGPIV. Residues 353 to 360 lie on the Periplasmic side of the membrane; the sequence is AHSGPQAA. Residues 361–381 form a helical membrane-spanning segment; sequence LLTANGLYAVVFVMCFALGFV. The Cytoplasmic portion of the chain corresponds to 382-393; that stretch reads SRHRQHSSPAAH.

This sequence belongs to the major facilitator superfamily. TsgA family.

It localises to the cell inner membrane. This Salmonella paratyphi A (strain ATCC 9150 / SARB42) protein is Protein TsgA.